The sequence spans 741 residues: Protein O-mannosyl-transferase TMTC4 (741 aa).

Over 1–10 (MVELDADLDH) the chain is Cytoplasmic. A helical transmembrane segment spans residues 11 to 31 (IVPSVLPPFWAKLVVGFVSLL). The Extracellular portion of the chain corresponds to 32–110 (CFARSYDGDF…FHPVGFHVVN (79 aa)). Residue N77 is glycosylated (N-linked (GlcNAc...) asparagine). A helical transmembrane segment spans residues 111 to 131 (ILLHGSISILMLDVFSVLFGG). Residues 132–146 (LQYTGKGQRVHLAPR) are Cytoplasmic-facing. 2 helical membrane passes run 147-166 (ASLL…ECVA) and 167-185 (GVVG…LSFL). The Cytoplasmic portion of the chain corresponds to 186–198 (GYCQAFKETGNKE). The helical transmembrane segment at 199–219 (GTHSSTFWVLLSIFLGAVAML) threads the bilayer. The Extracellular portion of the chain corresponds to 220–224 (CKEQG). Residues 225-245 (ITVLGLNAVFDILVIGKLDIL) form a helical membrane-spanning segment. Residues 246 to 265 (AAVRKVLHKDKSQENAGMFK) are Cytoplasmic-facing. Residues 266–286 (NGGLLFRIALLTIGGTSMLYI) form a helical membrane-spanning segment. Residues 287–354 (RWKIMGTGPP…PLIKSVGDWR (68 aa)) lie on the Extracellular side of the membrane. The helical transmembrane segment at 355–375 (VIALAALWLCLIGLIFQALCS) threads the bilayer. Residues 376-382 (EDSCKRR) lie on the Cytoplasmic side of the membrane. A helical membrane pass occupies residues 383–403 (ILTLGLGFLVIPFLPASNLFF). Over 404–412 (RVGFVVAER) the chain is Extracellular. Residues 413–433 (VLYLPSAGYCVLLTFGFGALS) traverse the membrane as a helical segment. The Cytoplasmic segment spans residues 434-441 (RHTKKKKP). The chain crosses the membrane as a helical span at residues 442–462 (VAAIILGILLINALRCVIRSG). Topologically, residues 463–741 (EWRSEEQLFR…KLEQTQKKDV (279 aa)) are extracellular. TPR repeat units follow at residues 482–515 (AKVH…NPKY), 516–549 (VHAM…QPDF), 550–583 (AAAW…RRKY), 584–617 (PDCY…KPEH), 618–651 (SLAW…IPND), 652–685 (HSLM…NPNV), and 686–719 (ASYH…DPVA). Residue N497 is glycosylated (N-linked (GlcNAc...) asparagine). N609 carries N-linked (GlcNAc...) asparagine glycosylation. N725 carries an N-linked (GlcNAc...) asparagine glycan.

Belongs to the TMTC family.

The protein resides in the membrane. The protein localises to the endoplasmic reticulum. It catalyses the reaction a di-trans,poly-cis-dolichyl beta-D-mannosyl phosphate + L-seryl-[protein] = 3-O-(alpha-D-mannosyl)-L-seryl-[protein] + a di-trans,poly-cis-dolichyl phosphate + H(+). It carries out the reaction a di-trans,poly-cis-dolichyl beta-D-mannosyl phosphate + L-threonyl-[protein] = 3-O-(alpha-D-mannosyl)-L-threonyl-[protein] + a di-trans,poly-cis-dolichyl phosphate + H(+). It functions in the pathway protein modification; protein glycosylation. Transfers mannosyl residues to the hydroxyl group of serine or threonine residues. The 4 members of the TMTC family are O-mannosyl-transferases dedicated primarily to the cadherin superfamily, each member seems to have a distinct role in decorating the cadherin domains with O-linked mannose glycans at specific regions. Also acts as O-mannosyl-transferase on other proteins such as PDIA3. The protein is Protein O-mannosyl-transferase TMTC4 of Mus musculus (Mouse).